The sequence spans 132 residues: MVMTDPIADYLTRIRNANMAKHDSVEIPASNIKKSISEILKREGFIRDYEVADDNKQGVIKVFLKYGPNGERVISGLKRISKPGLRNYVSAEDLPKVLNGLGIAIVSTSAGVITDKEARQKNVGGEVVAYVW.

Belongs to the universal ribosomal protein uS8 family. As to quaternary structure, part of the 30S ribosomal subunit. Contacts proteins S5 and S12.

One of the primary rRNA binding proteins, it binds directly to 16S rRNA central domain where it helps coordinate assembly of the platform of the 30S subunit. This chain is Small ribosomal subunit protein uS8, found in Lactobacillus acidophilus (strain ATCC 700396 / NCK56 / N2 / NCFM).